Consider the following 455-residue polypeptide: Anaerobic glycerol-3-phosphate dehydrogenase subunit B (455 aa).

It belongs to the anaerobic G-3-P dehydrogenase subunit B family. In terms of assembly, composed of a catalytic GlpA/B dimer and of membrane bound GlpC. It depends on FMN as a cofactor.

The enzyme catalyses a quinone + sn-glycerol 3-phosphate = dihydroxyacetone phosphate + a quinol. It participates in polyol metabolism; glycerol degradation via glycerol kinase pathway; glycerone phosphate from sn-glycerol 3-phosphate (anaerobic route): step 1/1. Its function is as follows. Conversion of glycerol 3-phosphate to dihydroxyacetone. Uses fumarate or nitrate as electron acceptor. The polypeptide is Anaerobic glycerol-3-phosphate dehydrogenase subunit B (Aliivibrio fischeri (strain ATCC 700601 / ES114) (Vibrio fischeri)).